Reading from the N-terminus, the 344-residue chain is Peroxidase 36 (344 aa).

Residues 1 to 28 (MNTKTVKSMAGIVLSQISLVALFPLCIC) form the signal peptide. 4 disulfide bridges follow: C50/C130, C83/C88, C136/C337, and C215/C247. The Proton acceptor role is filled by H81. Positions 82, 85, 87, 89, and 91 each coordinate Ca(2+). P178 serves as a coordination point for substrate. H208 is a heme b binding site. A Ca(2+)-binding site is contributed by T209. Residue N224 is glycosylated (N-linked (GlcNAc...) asparagine). 3 residues coordinate Ca(2+): D260, T263, and D268.

Belongs to the peroxidase family. Classical plant (class III) peroxidase subfamily. The cofactor is heme b. Requires Ca(2+) as cofactor.

The protein resides in the secreted. It catalyses the reaction 2 a phenolic donor + H2O2 = 2 a phenolic radical donor + 2 H2O. Functionally, removal of H(2)O(2), oxidation of toxic reductants, biosynthesis and degradation of lignin, suberization, auxin catabolism, response to environmental stresses such as wounding, pathogen attack and oxidative stress. These functions might be dependent on each isozyme/isoform in each plant tissue. In Arabidopsis thaliana (Mouse-ear cress), this protein is Peroxidase 36 (PER36).